A 729-amino-acid polypeptide reads, in one-letter code: Golgin subfamily A member 5 (729 aa).

Residue S2 is modified to N-acetylserine. The Cytoplasmic portion of the chain corresponds to 2-696 (SWFADLAGRA…IFLRRYPIAR (695 aa)). Dimethylated arginine is present on residues R27 and R89. 2 disordered regions span residues 89–222 (RTVG…SQEL) and 626–645 (SASS…VDSG). Phosphoserine is present on S116. A compositionally biased stretch (basic and acidic residues) spans 134-146 (PTGRVEVKKEKGR). A compositionally biased stretch (low complexity) spans 148–167 (PVSPSSPSGVSSVNTSVTTT). Polar residues-rich tracts occupy residues 175 to 186 (GSQSPGVNSSDS) and 626 to 638 (SASS…SAIN). The stretch at 215 to 629 (GSSRSQELSN…LEQQVHSASS (415 aa)) forms a coiled coil. The helical; Anchor for type IV membrane protein transmembrane segment at 697–717 (VFVIIYMALLHLWVMIVLLTY) threads the bilayer. Residues 718–729 (SPEMHHDQPYGK) lie on the Lumenal side of the membrane.

Homodimer. Interacts with RAB1A that has been activated by GTP-binding. Interacts with isoform CASP of CUX1. In terms of processing, highly phosphorylated during mitosis. Phosphorylation is barely detectable during interphase.

Its subcellular location is the golgi apparatus membrane. Involved in maintaining Golgi structure. Stimulates the formation of Golgi stacks and ribbons. Involved in intra-Golgi retrograde transport. The sequence is that of Golgin subfamily A member 5 (Golga5) from Mus musculus (Mouse).